A 1490-amino-acid polypeptide reads, in one-letter code: WD repeat-containing protein 7 (1490 aa).

WD repeat units lie at residues 17-56 (APTH…QINP), 62-104 (GHTA…CIEF), 156-199 (ISPD…SDMQ), 324-366 (LICP…DKQG), 404-443 (NEPL…IVQL), 462-507 (GHRN…MKHI), and 558-597 (RHLF…LDRC). Disordered regions lie at residues 761–783 (DEEE…YRSS) and 911–945 (GDHM…IVQG). Positions 768-782 (IMRQRREESDPEYRS) are enriched in basic and acidic residues. Ser935 bears the Phosphoserine mark. Residues 936–945 (PPTSSNIVQG) are compositionally biased toward polar residues. WD repeat units follow at residues 1351-1390 (PAIC…CQTI) and 1392-1432 (GHKG…LGSI). Position 1456 is a phosphoserine (Ser1456).

The protein is WD repeat-containing protein 7 (WDR7) of Homo sapiens (Human).